The chain runs to 325 residues: Diacylglycerol acyltransferase/mycolyltransferase Ag85B (325 aa).

An N-terminal signal peptide occupies residues Met-1 to Ala-40. Leu-82–Arg-83 provides a ligand contact to substrate. Residues Phe-98–Val-108 are fibronectin-binding. The cysteines at positions 127 and 132 are disulfide-linked. Residues Ser-166 and Asp-194 each coordinate substrate. Residue Ser-166 is the Nucleophile of the active site. Glu-270 is an active-site residue. Substrate-binding positions include Phe-272–Ser-275, Lys-279, and His-302–Trp-304. Residue His-302 is part of the active site.

The protein belongs to the mycobacterial A85 antigen family.

The protein localises to the secreted. It catalyses the reaction 2 alpha,alpha'-trehalose 6-mycolate = alpha,alpha'-trehalose 6,6'-bismycolate + alpha,alpha-trehalose. The enzyme catalyses an acyl-CoA + a 1,2-diacyl-sn-glycerol = a triacyl-sn-glycerol + CoA. Its function is as follows. The antigen 85 proteins (FbpA, FbpB, FbpC) are responsible for the high affinity of mycobacteria for fibronectin, a large adhesive glycoprotein, which facilitates the attachment of M.tuberculosis to murine alveolar macrophages (AMs). They also help to maintain the integrity of the cell wall by catalyzing the transfer of mycolic acids to cell wall arabinogalactan and through the synthesis of alpha,alpha-trehalose dimycolate (TDM, cord factor). They catalyze the transfer of a mycoloyl residue from one molecule of alpha,alpha-trehalose monomycolate (TMM) to another TMM, leading to the formation of TDM. This Mycobacterium kansasii protein is Diacylglycerol acyltransferase/mycolyltransferase Ag85B (fbpB).